Reading from the N-terminus, the 232-residue chain is 2-C-methyl-D-erythritol 4-phosphate cytidylyltransferase (232 aa).

It belongs to the IspD/TarI cytidylyltransferase family. IspD subfamily.

It catalyses the reaction 2-C-methyl-D-erythritol 4-phosphate + CTP + H(+) = 4-CDP-2-C-methyl-D-erythritol + diphosphate. The protein operates within isoprenoid biosynthesis; isopentenyl diphosphate biosynthesis via DXP pathway; isopentenyl diphosphate from 1-deoxy-D-xylulose 5-phosphate: step 2/6. Functionally, catalyzes the formation of 4-diphosphocytidyl-2-C-methyl-D-erythritol from CTP and 2-C-methyl-D-erythritol 4-phosphate (MEP). The protein is 2-C-methyl-D-erythritol 4-phosphate cytidylyltransferase of Rhodococcus erythropolis (strain PR4 / NBRC 100887).